We begin with the raw amino-acid sequence, 124 residues long: Large ribosomal subunit protein bL12 (124 aa).

Belongs to the bacterial ribosomal protein bL12 family. As to quaternary structure, homodimer. Part of the ribosomal stalk of the 50S ribosomal subunit. Forms a multimeric L10(L12)X complex, where L10 forms an elongated spine to which 2 to 4 L12 dimers bind in a sequential fashion. Binds GTP-bound translation factors.

In terms of biological role, forms part of the ribosomal stalk which helps the ribosome interact with GTP-bound translation factors. Is thus essential for accurate translation. The sequence is that of Large ribosomal subunit protein bL12 from Nitrosomonas europaea (strain ATCC 19718 / CIP 103999 / KCTC 2705 / NBRC 14298).